The following is a 216-amino-acid chain: Adenylate kinase (216 aa).

Gly-10–Thr-15 serves as a coordination point for ATP. Positions Ser-30 to Ile-59 are NMP. Residues Thr-31, Arg-36, Gly-57–Ile-59, Gly-85–Arg-88, and Gln-92 each bind AMP. Positions Gly-122–Asp-159 are LID. ATP-binding positions include Arg-123 and Thr-132–Tyr-133. Positions 156 and 167 each coordinate AMP. Gly-202 lines the ATP pocket.

Belongs to the adenylate kinase family. In terms of assembly, monomer.

It localises to the cytoplasm. The catalysed reaction is AMP + ATP = 2 ADP. The protein operates within purine metabolism; AMP biosynthesis via salvage pathway; AMP from ADP: step 1/1. Catalyzes the reversible transfer of the terminal phosphate group between ATP and AMP. Plays an important role in cellular energy homeostasis and in adenine nucleotide metabolism. This chain is Adenylate kinase, found in Ruthia magnifica subsp. Calyptogena magnifica.